We begin with the raw amino-acid sequence, 599 residues long: uncharacterized protein (599 aa).

This is an uncharacterized protein from Acanthamoeba polyphaga (Amoeba).